A 136-amino-acid polypeptide reads, in one-letter code: MENTQDFSPPHMDASRPSLGFPLGTALLLIIIFSLSGIFSCCYHWDKHRSLRRSLANGRPSADIESNPYKPKPPFPEMKKPQNLSVPVLMPGDNTPKFIALPCPCAPPRPEKLTVDVQTPPQSPPVKPARFPVPLY.

Residues 19 to 39 (LGFPLGTALLLIIIFSLSGIF) form a helical membrane-spanning segment. Disordered regions lie at residues 54–87 (SLANGRPSADIESNPYKPKPPFPEMKKPQNLSVP) and 112–136 (KLTVDVQTPPQSPPVKPARFPVPLY).

The protein localises to the membrane. This is an uncharacterized protein from Arabidopsis thaliana (Mouse-ear cress).